Here is a 490-residue protein sequence, read N- to C-terminus: Transcription factor lin-26 (490 aa).

Disordered regions lie at residues 96–176, 236–262, and 302–326; these read KYKD…PLHQ, TPEY…EPDS, and ASKP…KKHR. The segment at 101-110 is PEST; the sequence is SSSPESPSTT. Residues 101–120 are compositionally biased toward low complexity; that stretch reads SSSPESPSTTASTAAQHTPP. Composition is skewed to polar residues over residues 123–132 and 151–176; these read AVSTPTSINT and NLST…PLHQ. Positions 236 to 260 are enriched in basic and acidic residues; the sequence is TPEYDDNHHSETISKASSEDLKTEP. The C2H2-type; degenerate zinc-finger motif lies at 353 to 381; the sequence is YKCALCGKPTTLNSTGSRWNLLRHVIMIH.

Expressed in somatic gonads and germline precursors until the 50-cell stage. After the 100-cell stage, expression is seen in differentiating hypodermal and support cells (at protein level).

It localises to the nucleus. In terms of biological role, probable transcription factor. Required to specify the fates of hypodermal and neuron-associated support cells. Functions during vulval development, playing a role in vulval precursor cell fate specification. Positively modulates expression of homeobox protein lin-39, perhaps by binding to regulatory regions of the lin-39 gene, acting in the vulval lineage. This is Transcription factor lin-26 from Caenorhabditis elegans.